Reading from the N-terminus, the 476-residue chain is MARRLFLLLLAVTAGLSLTGTTVRAVGINWGTEASHPLPPSKVVELLKSNGIVKVKLFDADPKVLRALSGSNIGVTIGIQNSMLKSLNASVKVAESWVHDNVTRYFNGGNRVRIEYVAVGEEPFLQSYGNQYKPFVIGAAMNIQNALVKANLANEVKVVVPSSFDSFLSESGRPSSGHFRADLNKTMIELLSFLTKHHSPFFVTISPFLSFHQNKNISLDFSLFKETAKAHKDGRKTYRNSFDLSYDTLVSALFTIGFSEVDIVVSKIGWPTDGAENATSLTAEAFFKGLIVHLEKKTASLPRPPVETYIESLLDEDQRNLSAGNFERHWGVFTFDGQAKYNFSFNHKNQVNAQNVQYLPPKWCVVNNNKDLSNASARALEACAVADCTSILPGGSCSGIRWPGNVSYAFNSLYQQNDHSAESCNFGGLGLITTVDPSEDNCRFSIQLDTSHSSSQTPNFFQSWPLLLLFLLSGLF.

The N-terminal stretch at 1 to 25 (MARRLFLLLLAVTAGLSLTGTTVRA) is a signal peptide. 2 N-linked (GlcNAc...) asparagine glycosylation sites follow: Asn-88 and Asn-101. Glu-122 functions as the Proton donor in the catalytic mechanism. N-linked (GlcNAc...) asparagine glycosylation is found at Asn-184, Asn-216, Asn-277, Asn-320, Asn-342, Asn-374, and Asn-405. Residues Cys-364 and Cys-424 are joined by a disulfide bond. Ser-453 carries the GPI-anchor amidated serine lipid modification. Positions 454 to 476 (SSQTPNFFQSWPLLLLFLLSGLF) are cleaved as a propeptide — removed in mature form.

It belongs to the glycosyl hydrolase 17 family. Post-translationally, contains two additional disulfide bonds.

The protein resides in the secreted. It is found in the cell wall. Its subcellular location is the cell membrane. The catalysed reaction is Hydrolysis of (1-&gt;3)-beta-D-glucosidic linkages in (1-&gt;3)-beta-D-glucans.. The chain is Glucan endo-1,3-beta-glucosidase 9 from Arabidopsis thaliana (Mouse-ear cress).